The primary structure comprises 957 residues: SH3 domain-binding protein 4-B (957 aa).

The 60-residue stretch at 54 to 113 folds into the SH3 1 domain; that stretch reads ENVKEVVAIKDYCPNNFTTLKFSKGEHLYVLDASGGDWWYAHNTTEMGYIPSSYVQPLNY. The region spanning 312 to 449 is the ZU5 domain; that stretch reads TSIVCRLDSS…LEPVMYVVMV (138 aa). The SH3 2 domain occupies 649–719; it reads TSLKYGKLIK…HAKNVLVVGK (71 aa).

In terms of assembly, homodimer or homooligomer.

It localises to the membrane. The protein localises to the clathrin-coated pit. It is found in the cytoplasmic vesicle. The protein resides in the clathrin-coated vesicle. Its subcellular location is the nucleus. Its function is as follows. Possible role in regulating endocytosis of the transferrin receptor at the plasma membrane. Alternatively, may function as a negative regulator of the amino acid-induced TOR signaling by inhibiting the formation of active Rag GTPase complexes. Preferentially binds inactive Rag GTPase complexes and prevents their interaction with the mTORC1 complex inhibiting its relocalization to lysosomes and its activation. Thereby, may indirectly regulate cell growth, proliferation and autophagy. The polypeptide is SH3 domain-binding protein 4-B (sh3bp4-b) (Xenopus laevis (African clawed frog)).